A 710-amino-acid polypeptide reads, in one-letter code: Dendrin (710 aa).

Disordered stretches follow at residues Met1–Ser22, Trp62–Gly195, Ala213–Asp274, and Gly324–Gly375. Positions Ala103–Gly134 form a coiled coil. Basic and acidic residues predominate over residues Val105 to Arg127. The interval Arg113–Lys131 is nuclear localization. The segment at Gly186–Pro236 is interaction with MAGI2. The segment covering Glu265–Asp274 has biased composition (basic and acidic residues). The tract at residues Pro341 to Ala435 is interaction with ACTN1. Basic residues predominate over residues Pro360 to Arg370. Residue Ser388 is modified to Phosphoserine. Disordered stretches follow at residues Lys390–Glu422, Pro469–Ser508, and Asn521–Glu710. Residues Gly407 to Glu708 form an interaction with CD2AP and NPHS1 region. A compositionally biased stretch (polar residues) spans Pro469–Gln491. A compositionally biased stretch (basic and acidic residues) spans Gly693–Glu710.

As to quaternary structure, forms a ternary complex with MAGI2 and SH3KBP1; recruits DDN to the cytoplasm. Interacts with MAGI1. Interacts with ACTN1 and may interact with WWC1. Interacts with the podocyte slit diaphragm proteins CD2AP, NPHS1 and NPHS2; the interaction with CD2AP and NPHS1 is direct. As to expression, two forms of 81 kDa and 89 kDa are expressed in brain. The 81 kDa form is the only one found in kidney podocytes.

The protein resides in the cell projection. It localises to the dendritic spine membrane. Its subcellular location is the cytoplasm. The protein localises to the endoplasmic reticulum membrane. It is found in the perikaryon. The protein resides in the nucleus. In terms of biological role, promotes apoptosis of kidney glomerular podocytes. Podocytes are highly specialized cells essential to the ultrafiltration of blood, resulting in the extraction of urine and the retention of protein. The sequence is that of Dendrin (Ddn) from Mus musculus (Mouse).